The chain runs to 245 residues: Large ribosomal subunit protein eL29 (245 aa).

Residues methionine 1–serine 26 are compositionally biased toward basic residues. Disordered regions lie at residues methionine 1–lysine 33 and arginine 114–proline 245. Position 5 is an N6-methyllysine (lysine 5). At serine 31 the chain carries Phosphoserine. The residue at position 33 (lysine 33) is an N6-acetyllysine. The segment covering lysine 134–lysine 150 has biased composition (low complexity). Over residues alanine 157 to proline 171 the composition is skewed to basic and acidic residues. Composition is skewed to low complexity over residues lysine 172–alanine 226 and proline 234–proline 245.

Belongs to the eukaryotic ribosomal protein eL29 family. As to quaternary structure, component of the large ribosomal subunit.

It is found in the cytoplasm. Functionally, component of the large ribosomal subunit. The ribosome is a large ribonucleoprotein complex responsible for the synthesis of proteins in the cell. The polypeptide is Large ribosomal subunit protein eL29 (RPL29) (Oryctolagus cuniculus (Rabbit)).